Reading from the N-terminus, the 472-residue chain is 3-isopropylmalate dehydratase large subunit (472 aa).

Positions 347, 407, and 410 each coordinate [4Fe-4S] cluster.

Belongs to the aconitase/IPM isomerase family. LeuC type 1 subfamily. As to quaternary structure, heterodimer of LeuC and LeuD. [4Fe-4S] cluster is required as a cofactor.

The catalysed reaction is (2R,3S)-3-isopropylmalate = (2S)-2-isopropylmalate. Its pathway is amino-acid biosynthesis; L-leucine biosynthesis; L-leucine from 3-methyl-2-oxobutanoate: step 2/4. Its function is as follows. Catalyzes the isomerization between 2-isopropylmalate and 3-isopropylmalate, via the formation of 2-isopropylmaleate. The polypeptide is 3-isopropylmalate dehydratase large subunit (Synechococcus sp. (strain CC9902)).